We begin with the raw amino-acid sequence, 283 residues long: Ribosomal RNA small subunit methyltransferase A (283 aa).

S-adenosyl-L-methionine is bound by residues N13, L15, G39, E59, D87, and N108.

Belongs to the class I-like SAM-binding methyltransferase superfamily. rRNA adenine N(6)-methyltransferase family. RsmA subfamily.

The protein localises to the cytoplasm. The catalysed reaction is adenosine(1518)/adenosine(1519) in 16S rRNA + 4 S-adenosyl-L-methionine = N(6)-dimethyladenosine(1518)/N(6)-dimethyladenosine(1519) in 16S rRNA + 4 S-adenosyl-L-homocysteine + 4 H(+). Specifically dimethylates two adjacent adenosines (A1518 and A1519) in the loop of a conserved hairpin near the 3'-end of 16S rRNA in the 30S particle. May play a critical role in biogenesis of 30S subunits. The polypeptide is Ribosomal RNA small subunit methyltransferase A (Helicobacter hepaticus (strain ATCC 51449 / 3B1)).